Here is a 719-residue protein sequence, read N- to C-terminus: Ribosomal RNA large subunit methyltransferase K/L (719 aa).

A THUMP domain is found at 43–154; that stretch reads IGYKACLWSR…KGKANITLDL (112 aa).

Belongs to the methyltransferase superfamily. RlmKL family.

The protein localises to the cytoplasm. The catalysed reaction is guanosine(2445) in 23S rRNA + S-adenosyl-L-methionine = N(2)-methylguanosine(2445) in 23S rRNA + S-adenosyl-L-homocysteine + H(+). It carries out the reaction guanosine(2069) in 23S rRNA + S-adenosyl-L-methionine = N(2)-methylguanosine(2069) in 23S rRNA + S-adenosyl-L-homocysteine + H(+). In terms of biological role, specifically methylates the guanine in position 2445 (m2G2445) and the guanine in position 2069 (m7G2069) of 23S rRNA. This is Ribosomal RNA large subunit methyltransferase K/L from Aeromonas salmonicida (strain A449).